We begin with the raw amino-acid sequence, 179 residues long: 3-hydroxyanthranilate 3,4-dioxygenase (179 aa).

An O2-binding site is contributed by Arg-47. Fe cation contacts are provided by His-51, Glu-57, and His-96. Substrate is bound at residue Glu-57. Substrate-binding residues include Arg-100 and Glu-110. 4 residues coordinate Fe cation: Cys-125, Cys-128, Cys-162, and Cys-165.

The protein belongs to the 3-HAO family. Fe(2+) serves as cofactor.

The enzyme catalyses 3-hydroxyanthranilate + O2 = (2Z,4Z)-2-amino-3-carboxymuconate 6-semialdehyde. The protein operates within cofactor biosynthesis; NAD(+) biosynthesis; quinolinate from L-kynurenine: step 3/3. In terms of biological role, catalyzes the oxidative ring opening of 3-hydroxyanthranilate to 2-amino-3-carboxymuconate semialdehyde, which spontaneously cyclizes to quinolinate. The chain is 3-hydroxyanthranilate 3,4-dioxygenase from Bacillus thuringiensis (strain Al Hakam).